The chain runs to 352 residues: Protein RecA (352 aa).

67-74 (GPESSGKT) contributes to the ATP binding site. Residues 332 to 352 (VKPADAESKEDSPKLKAVDGF) form a disordered region. The span at 335–352 (ADAESKEDSPKLKAVDGF) shows a compositional bias: basic and acidic residues.

Belongs to the RecA family.

It is found in the cytoplasm. Functionally, can catalyze the hydrolysis of ATP in the presence of single-stranded DNA, the ATP-dependent uptake of single-stranded DNA by duplex DNA, and the ATP-dependent hybridization of homologous single-stranded DNAs. It interacts with LexA causing its activation and leading to its autocatalytic cleavage. This chain is Protein RecA, found in Pseudarthrobacter chlorophenolicus (strain ATCC 700700 / DSM 12829 / CIP 107037 / JCM 12360 / KCTC 9906 / NCIMB 13794 / A6) (Arthrobacter chlorophenolicus).